Consider the following 1288-residue polypeptide: SH3 domain and tetratricopeptide repeat-containing protein 2 (1288 aa).

SH3 domains follow at residues 176–240 (EGHF…PLPL) and 268–331 (IGRG…PDSY). The span at 386 to 395 (NPPNDLSASQ) shows a compositional bias: polar residues. Disordered regions lie at residues 386-405 (NPPN…VRPG) and 410-444 (EHQA…LPEP). TPR repeat units lie at residues 528-561 (ARLC…LNGA), 757-790 (RALC…GQLL), 836-869 (GVIY…AQEV), 1001-1037 (GRLL…FIDL), 1084-1118 (LKLY…LARR), 1119-1152 (LKAV…ATLA), 1166-1199 (LVAF…CPPW), and 1210-1244 (AKVY…AVLL).

Strongly expressed in brain and spinal cord. Expressed at equal level in spinal cord and sciatic nerve. Weakly expressed in striated muscle.

In Homo sapiens (Human), this protein is SH3 domain and tetratricopeptide repeat-containing protein 2 (SH3TC2).